A 275-amino-acid polypeptide reads, in one-letter code: NAD(P)H dehydrogenase [quinone] 1 (275 aa).

Residues His13, 19–20, and Gln68 each bind FAD; that span reads FN. Ser83 is modified (phosphoserine). Position 105-108 (105-108) interacts with FAD; that stretch reads LQWF. 127 to 129 contributes to the substrate binding site; sequence AYT. FAD contacts are provided by residues 149–152, Tyr157, and Arg202; that span reads TTGG. Residues 226–275 form an important for apoenzyme conformational stability region; it reads PSSLFDLNFQAGFLLKKEIEDEQKNNKYGLSVGHHLGKPIPTDNQIKARK. A Glycyl lysine isopeptide (Lys-Gly) (interchain with G-Cter in SUMO2) cross-link involves residue Lys252.

Belongs to the NAD(P)H dehydrogenase (quinone) family. As to quaternary structure, homodimer. Interacts with PDLIM4 isoform 2; this interaction stabilizes PDLIM4 isoform 2 in response to oxidative stress and protects it from ubiquitin-independent degradation by the core 20S proteasome. Interacts with TP73 (via SAM domain); this interaction is NADH-dependent, stabilizes TP73 in response to oxidative stress and protects it from ubiquitin-independent degradation by the 20S proteasome. Interacts with TP53; this interaction is NADH-dependent, stabilizes TP53 in response to oxidative stress and protects it from ubiquitin-independent degradation by the 20S proteasome. Requires FAD as cofactor.

It is found in the cytoplasm. The protein localises to the cytosol. It carries out the reaction a quinone + NADH + H(+) = a quinol + NAD(+). The catalysed reaction is a quinone + NADPH + H(+) = a quinol + NADP(+). The enzyme catalyses ubiquinone-10 + NADH + H(+) = ubiquinol-10 + NAD(+). It catalyses the reaction menadione + NADH + H(+) = menadiol + NAD(+). Flavin-containing quinone reductase that catalyzes two-electron reduction of quinones to hydroquinones using either NADH or NADPH as electron donors. In a ping-pong kinetic mechanism, the electrons are sequentially transferred from NAD(P)H to flavin cofactor and then from reduced flavin to the quinone, bypassing the formation of semiquinone and reactive oxygen species. Regulates cellular redox state primarily through quinone detoxification. Reduces components of plasma membrane redox system such as coenzyme Q and vitamin quinones, producing antioxidant hydroquinone forms. In the process may function as superoxide scavenger to prevent hydroquinone oxidation and facilitate excretion. Alternatively, can activate quinones and their derivatives by generating redox reactive hydroquinones with DNA cross-linking antitumor potential. Acts as a gatekeeper of the core 20S proteasome known to degrade proteins with unstructured regions. Upon oxidative stress, interacts with tumor suppressors TP53 and TP73 in a NADH-dependent way and inhibits their ubiquitin-independent degradation by the 20S proteasome. The protein is NAD(P)H dehydrogenase [quinone] 1 (NQO1) of Cavia porcellus (Guinea pig).